We begin with the raw amino-acid sequence, 122 residues long: Large ribosomal subunit protein uL14 (122 aa).

This sequence belongs to the universal ribosomal protein uL14 family. Part of the 50S ribosomal subunit. Forms a cluster with proteins L3 and L19. In the 70S ribosome, L14 and L19 interact and together make contacts with the 16S rRNA in bridges B5 and B8.

Functionally, binds to 23S rRNA. Forms part of two intersubunit bridges in the 70S ribosome. This chain is Large ribosomal subunit protein uL14, found in Psychromonas ingrahamii (strain DSM 17664 / CCUG 51855 / 37).